Here is a 491-residue protein sequence, read N- to C-terminus: MEHQLTIYNTLDRKKELFVPLHAPHVGMYVCGPTVYGDAHLGHARPAITFDVLFRYLTRLGYKVRYVRNITDVGHLEHDADEGEDKIAKKARLEQLEPMEVVQYYLNRYHKAMEALNVLPPSIEPHASGHIIEQIELVKKILDAGYAYESQGSVYFDVAKYNKDYHYGKLSGRNLDDVLNTTRELDGQEEKHNPADFALWKRAQPEHIMRWPSPWGDGFPGWHAECTAMGRKYLGEHFDIHGGGMDLIFPHHECEIAQSVASQGDDMVHYWMHNNMITINGTKMGKSLGNFITLDEFFSGSHKLLTQAYSPMTIRFFILQAHYRSPVDFSNEALQAAEKGLSRLMEAVDSLEKITPAATSNVDVKSLRTKCFEAMNDDLNTPIVISHLFDGAKMINNIIAGNNTISADDLKDLKEVFHTFCFDILGLKEEIGSSDGREAAYGKVVDMLLEQRVKAKANKDWATSDLIRNELTALGFEIKDTKDGFEWKLNK.

Cysteine 31 is a binding site for Zn(2+). A 'HIGH' region motif is present at residues 33–43; it reads PTVYGDAHLGH. The Zn(2+) site is built by cysteine 226, histidine 251, and glutamate 255. Residues 283–287 carry the 'KMSKS' region motif; it reads KMGKS. Lysine 286 contributes to the ATP binding site.

The protein belongs to the class-I aminoacyl-tRNA synthetase family. Monomer. Zn(2+) is required as a cofactor.

The protein localises to the cytoplasm. It catalyses the reaction tRNA(Cys) + L-cysteine + ATP = L-cysteinyl-tRNA(Cys) + AMP + diphosphate. This chain is Cysteine--tRNA ligase, found in Bacteroides fragilis (strain ATCC 25285 / DSM 2151 / CCUG 4856 / JCM 11019 / LMG 10263 / NCTC 9343 / Onslow / VPI 2553 / EN-2).